We begin with the raw amino-acid sequence, 582 residues long: tRNA-guanine(15) transglycosylase (582 aa).

The active-site Nucleophile is the Asp-95. 2 residues coordinate substrate: Asp-130 and Gly-196. 3 residues coordinate Zn(2+): Cys-279, Cys-281, and Cys-284. Positions 507–582 constitute a PUA domain; that stretch reads RMRVVVNKEA…RAVKVRKGVE (76 aa).

This sequence belongs to the archaeosine tRNA-ribosyltransferase family. In terms of assembly, homodimer. Requires Zn(2+) as cofactor.

It catalyses the reaction guanosine(15) in tRNA + 7-cyano-7-deazaguanine = 7-cyano-7-carbaguanosine(15) in tRNA + guanine. It participates in tRNA modification; archaeosine-tRNA biosynthesis. In terms of biological role, exchanges the guanine residue with 7-cyano-7-deazaguanine (preQ0) at position 15 in the dihydrouridine loop (D-loop) of archaeal tRNAs. In Pyrococcus horikoshii (strain ATCC 700860 / DSM 12428 / JCM 9974 / NBRC 100139 / OT-3), this protein is tRNA-guanine(15) transglycosylase (tgtA).